Consider the following 302-residue polypeptide: Putative gluconeogenesis factor (302 aa).

It belongs to the gluconeogenesis factor family.

Its subcellular location is the cytoplasm. Functionally, required for morphogenesis under gluconeogenic growth conditions. This Escherichia coli O157:H7 protein is Putative gluconeogenesis factor (ybhK).